A 155-amino-acid chain; its full sequence is MAVKKIVQIGHEALKKVSEPVKDVNEVKGLIQDLKDTLATVEGIGLAAPQIAVNKRVVYINFGDGENEYVLINPEVTGVSKETYEDYEGCLSYVMHEGLVERPRAVRIQALNEKGELKVYEAQDLLARCFLHEIDHLEGIMYVDRAKEMYELVEK.

2 residues coordinate Fe cation: Cys-90 and His-132. Glu-133 is a catalytic residue. Fe cation is bound at residue His-136.

Belongs to the polypeptide deformylase family. Fe(2+) serves as cofactor.

The enzyme catalyses N-terminal N-formyl-L-methionyl-[peptide] + H2O = N-terminal L-methionyl-[peptide] + formate. Functionally, removes the formyl group from the N-terminal Met of newly synthesized proteins. Requires at least a dipeptide for an efficient rate of reaction. N-terminal L-methionine is a prerequisite for activity but the enzyme has broad specificity at other positions. The chain is Peptide deformylase 2 from Clostridium perfringens (strain 13 / Type A).